We begin with the raw amino-acid sequence, 473 residues long: UDP-N-acetylmuramate--L-alanine ligase (473 aa).

Residue 114 to 120 coordinates ATP; that stretch reads GTHGKTT.

It belongs to the MurCDEF family.

It is found in the cytoplasm. It catalyses the reaction UDP-N-acetyl-alpha-D-muramate + L-alanine + ATP = UDP-N-acetyl-alpha-D-muramoyl-L-alanine + ADP + phosphate + H(+). It participates in cell wall biogenesis; peptidoglycan biosynthesis. Functionally, cell wall formation. The protein is UDP-N-acetylmuramate--L-alanine ligase of Chlorobium luteolum (strain DSM 273 / BCRC 81028 / 2530) (Pelodictyon luteolum).